Reading from the N-terminus, the 571-residue chain is MMNKESFGACLLLTLPEDVFAVISRFLSPSDICNLILCGKSLCALVDSEKTWLVQCEEVKVLPLIELVQWRIGISSYKALCRFLVEVVKPLLGIWVQENPELGNVVYVMPGFLSVVGCRIIPQKVAPLWIQEGQVKWSPVFEIICGFDGSKGFFLHGRDKQGSFLYPGFVMDIEKSCNVLLLEVEPRSEKSSCNEIEREVGDPFGDLDFSDRMNLLDIVTKHVSLRVDEPLTGNLFPTRSKYDEAMMLERRNMLLKMLKFGGNWKHINLEEDEQLCYNHIEIDIKKLLENLGDDIDNMEDIEDQIEVTPRKKSFRRFLRSGIKHILGKFSSSKINSPSSSETRRSNRQSFLSSGNTFCLSLKASCTLMSSYEGWPIMSADNFSLHKLPMKKPLDHDVYAGLWGGTFGWPPGKDIEDESLLLLMLTYGESEEGSERILFGTKILSYFAEHPNGSSMFVVNIDTPSLEPFPFDTDGRDFEHSYTGEGIADGYGFRYPGSKPGSLFVSSNDLLAFVWQGTEDVITLQRINLGEILKKSLGSCVSPLLPTKNFTYTKRSYSNVFAKSSTYSSSSE.

An F-box domain is found at 9 to 55; sequence ACLLLTLPEDVFAVISRFLSPSDICNLILCGKSLCALVDSEKTWLVQ.

The polypeptide is Putative F-box protein At5g39460 (Arabidopsis thaliana (Mouse-ear cress)).